A 348-amino-acid chain; its full sequence is MKGLYFQQSSTNEEVTFVFQEKENVPVTEDNFVRVQVKACALSHINTKLLAEMKMEKDFFPVGREVSGIVLEVGRKVTFFQPDDEVVGILPLDSEDPGLCEVIRVHEHYLVHKPEKVSWTEAAGVIRDGVRACTALYYLSQLSPGKSVLIMDGASAFGTIAIQLAHHRGAKVISTAHSLEDKQHLERLRPSIARVIDVSNGKVHVAESCLEETGGLGVDIVIDAGVRLYSKDDEPAVKLHLPHKHDIITLLGVGGHWVTTEENLQLDPPDSHCLFLKGATVAFLNDEVWNLSNAQQGKYLCILKDVMEKLSAGVFRPLLDEPIPLYEAKVSMEVVQKNQERKKQVVQF.

It belongs to the zinc-containing alcohol dehydrogenase family. Quinone oxidoreductase subfamily. As to quaternary structure, component of the FERRY complex composed of five subunits, TBCK, PPP1R21, FERRY3, CRYZL1 and GATD1 with a ratio of 1:2:1:2:4, respectively.

The protein resides in the early endosome. Component of the FERRY complex (Five-subunit Endosomal Rab5 and RNA/ribosome intermediary). The FERRY complex directly interacts with mRNAs and RAB5A, and functions as a RAB5A effector involved in the localization and the distribution of specific mRNAs most likely by mediating their endosomal transport. The complex recruits mRNAs and ribosomes to early endosomes through direct mRNA-interaction. The sequence is that of Quinone oxidoreductase-like protein 1 (Cryzl1) from Mus musculus (Mouse).